Here is a 214-residue protein sequence, read N- to C-terminus: Molybdenum cofactor guanylyltransferase (214 aa).

GTP is bound by residues 18–20 (LAG), Lys-31, Asp-77, and Asp-112. Residue Asp-112 participates in Mg(2+) binding.

This sequence belongs to the MobA family. In terms of assembly, monomer. Requires Mg(2+) as cofactor.

It localises to the cytoplasm. The enzyme catalyses Mo-molybdopterin + GTP + H(+) = Mo-molybdopterin guanine dinucleotide + diphosphate. In terms of biological role, transfers a GMP moiety from GTP to Mo-molybdopterin (Mo-MPT) cofactor (Moco or molybdenum cofactor) to form Mo-molybdopterin guanine dinucleotide (Mo-MGD) cofactor. The sequence is that of Molybdenum cofactor guanylyltransferase from Rhodopseudomonas palustris (strain HaA2).